A 56-amino-acid polypeptide reads, in one-letter code: Large ribosomal subunit protein bL32 (56 aa).

This sequence belongs to the bacterial ribosomal protein bL32 family.

In Brevibacillus brevis (strain 47 / JCM 6285 / NBRC 100599), this protein is Large ribosomal subunit protein bL32.